The sequence spans 576 residues: Zinc finger protein 791 (576 aa).

The KRAB domain occupies 4–90 (VAFKDVSVSF…AETFSPNLSV (87 aa)). 17 consecutive C2H2-type zinc fingers follow at residues 100–122 (YECT…MRSH), 132–154 (YKCK…ERSH), 160–182 (YKCK…EQTH), 188–210 (YECK…ERIH), 216–238 (YECK…ERTH), 244–266 (YACK…MITH), 272–294 (YKCK…ERIH), 300–322 (YTCK…ERIH), 328–350 (YKCK…VRVH), 356–378 (YKCK…ERTH), 384–406 (YECK…KRNH), 412–434 (YECK…MITH), 440–462 (YKCR…ERTH), 468–490 (YECK…KRTH), 496–518 (YECK…MRMH), 524–546 (YKCK…TRIH), and 552–574 (LECK…MRMH).

The protein belongs to the krueppel C2H2-type zinc-finger protein family.

Its subcellular location is the nucleus. Its function is as follows. May be involved in transcriptional regulation. The polypeptide is Zinc finger protein 791 (ZNF791) (Pongo abelii (Sumatran orangutan)).